The chain runs to 158 residues: Transcription elongation factor GreA (158 aa).

Residues 1-67 adopt a coiled-coil conformation; it reads MSNNIPLTKE…FIEGRIQELQ (67 aa).

This sequence belongs to the GreA/GreB family.

Its function is as follows. Necessary for efficient RNA polymerase transcription elongation past template-encoded arresting sites. The arresting sites in DNA have the property of trapping a certain fraction of elongating RNA polymerases that pass through, resulting in locked ternary complexes. Cleavage of the nascent transcript by cleavage factors such as GreA or GreB allows the resumption of elongation from the new 3'terminus. GreA releases sequences of 2 to 3 nucleotides. The polypeptide is Transcription elongation factor GreA (Trichlorobacter lovleyi (strain ATCC BAA-1151 / DSM 17278 / SZ) (Geobacter lovleyi)).